The following is a 270-amino-acid chain: NAD kinase (270 aa).

D45 functions as the Proton acceptor in the catalytic mechanism. Residues D45 to G46, N121 to E122, R147, D149, T160 to S165, and A184 contribute to the NAD(+) site.

Belongs to the NAD kinase family. Requires a divalent metal cation as cofactor.

The protein resides in the cytoplasm. The enzyme catalyses NAD(+) + ATP = ADP + NADP(+) + H(+). Involved in the regulation of the intracellular balance of NAD and NADP, and is a key enzyme in the biosynthesis of NADP. Catalyzes specifically the phosphorylation on 2'-hydroxyl of the adenosine moiety of NAD to yield NADP. This chain is NAD kinase, found in Limosilactobacillus reuteri subsp. reuteri (strain JCM 1112) (Lactobacillus reuteri).